The following is a 52-amino-acid chain: Rubredoxin-2 (52 aa).

The Rubredoxin-like domain maps to 1–52 (MEQWKCNICGYIYNPETGDPEGDIPAGTSFESLPDSWMCPVCGAGKEEFTKI). Residues cysteine 6, cysteine 9, cysteine 39, and cysteine 42 each coordinate Fe cation.

Belongs to the rubredoxin family. In terms of assembly, monomer. It depends on Fe(3+) as a cofactor.

Its function is as follows. Serves as an electron acceptor for pyruvate ferredoxin oxidoreductase (PFOR). The sequence is that of Rubredoxin-2 (rub2) from Chlorobaculum tepidum (strain ATCC 49652 / DSM 12025 / NBRC 103806 / TLS) (Chlorobium tepidum).